The sequence spans 297 residues: tRNA pseudouridine synthase B (297 aa).

The Nucleophile role is filled by D39.

This sequence belongs to the pseudouridine synthase TruB family. Type 1 subfamily.

It carries out the reaction uridine(55) in tRNA = pseudouridine(55) in tRNA. Its function is as follows. Responsible for synthesis of pseudouridine from uracil-55 in the psi GC loop of transfer RNAs. In Lactobacillus acidophilus (strain ATCC 700396 / NCK56 / N2 / NCFM), this protein is tRNA pseudouridine synthase B.